Consider the following 183-residue polypeptide: uncharacterized protein (183 aa).

Residues 1 to 36 form a disordered region; it reads MAKRGNKKKQEAPLSLGKHTVGGRVGKPTNAKTGSA. One can recognise an RRM domain in the interval 100-174; that stretch reads TNVVIENLAP…FKLSCYIKKN (75 aa).

The protein localises to the nucleus. It is found in the nucleolus. This is an uncharacterized protein from Schizosaccharomyces pombe (strain 972 / ATCC 24843) (Fission yeast).